The following is a 226-amino-acid chain: Beta-phosphoglucomutase (226 aa).

The active-site Nucleophile is aspartate 7. 2 residues coordinate Mg(2+): aspartate 7 and aspartate 9. Aspartate 7 carries the 4-aspartylphosphate modification. Aspartate 9 acts as the Proton donor/acceptor in catalysis. Beta-D-glucose 6-phosphate-binding residues include aspartate 9, glycine 44, isoleucine 45, arginine 47, serine 116, arginine 117, and asparagine 118. Position 170 (aspartate 170) interacts with Mg(2+).

This sequence belongs to the HAD-like hydrolase superfamily. CbbY/CbbZ/Gph/YieH family. As to quaternary structure, homodimer. The cofactor is Mg(2+). Post-translationally, autophosphorylated.

It is found in the cytoplasm. The enzyme catalyses beta-D-glucose 1-phosphate = beta-D-glucose 6-phosphate. Catalyzes the interconversion of D-glucose 1-phosphate (G1P) and D-glucose 6-phosphate (G6P), forming beta-D-glucose 1,6-(bis)phosphate (beta-G16P) as an intermediate. This Bacillus subtilis (strain 168) protein is Beta-phosphoglucomutase (yvdM).